Here is a 1408-residue protein sequence, read N- to C-terminus: DNA-directed RNA polymerase subunit beta' (1408 aa).

4 residues coordinate Zn(2+): cysteine 70, cysteine 72, cysteine 85, and cysteine 88. The Mg(2+) site is built by aspartate 460, aspartate 462, and aspartate 464. Positions 814, 888, 895, and 898 each coordinate Zn(2+).

This sequence belongs to the RNA polymerase beta' chain family. In terms of assembly, the RNAP catalytic core consists of 2 alpha, 1 beta, 1 beta' and 1 omega subunit. When a sigma factor is associated with the core the holoenzyme is formed, which can initiate transcription. It depends on Mg(2+) as a cofactor. Zn(2+) serves as cofactor.

It carries out the reaction RNA(n) + a ribonucleoside 5'-triphosphate = RNA(n+1) + diphosphate. Its function is as follows. DNA-dependent RNA polymerase catalyzes the transcription of DNA into RNA using the four ribonucleoside triphosphates as substrates. The polypeptide is DNA-directed RNA polymerase subunit beta' (Serratia proteamaculans (strain 568)).